A 251-amino-acid polypeptide reads, in one-letter code: Zinc import ATP-binding protein ZnuC (251 aa).

Residues V5–R220 form the ABC transporter domain. G37–S44 is a binding site for ATP.

This sequence belongs to the ABC transporter superfamily. Zinc importer (TC 3.A.1.15.5) family. In terms of assembly, the complex is composed of two ATP-binding proteins (ZnuC), two transmembrane proteins (ZnuB) and a solute-binding protein (ZnuA).

It localises to the cell inner membrane. It catalyses the reaction Zn(2+)(out) + ATP(in) + H2O(in) = Zn(2+)(in) + ADP(in) + phosphate(in) + H(+)(in). Its function is as follows. Part of the ABC transporter complex ZnuABC involved in zinc import. Responsible for energy coupling to the transport system. Seems to be important for the virulence. In Salmonella typhimurium (strain LT2 / SGSC1412 / ATCC 700720), this protein is Zinc import ATP-binding protein ZnuC.